A 116-amino-acid polypeptide reads, in one-letter code: Iron-sulfur cluster insertion protein ErpA (116 aa).

Positions 44, 108, and 110 each coordinate iron-sulfur cluster.

The protein belongs to the HesB/IscA family. In terms of assembly, homodimer. Iron-sulfur cluster is required as a cofactor.

Its function is as follows. Required for insertion of 4Fe-4S clusters for at least IspG. The polypeptide is Iron-sulfur cluster insertion protein ErpA (Shewanella amazonensis (strain ATCC BAA-1098 / SB2B)).